Consider the following 140-residue polypeptide: uncharacterized protein (140 aa).

Helical transmembrane passes span 42 to 62, 65 to 85, and 96 to 116; these read AFLFNFLPLLLLLAFLDIFAS, ASFLAAVLIKILVKSVFSALG, and RASDCLAALEFFDIFLAMLCF.

The protein localises to the membrane. This is an uncharacterized protein from Saccharomyces cerevisiae (strain ATCC 204508 / S288c) (Baker's yeast).